Here is a 561-residue protein sequence, read N- to C-terminus: SUN domain-containing protein 5 (561 aa).

The chain crosses the membrane as a helical span at residues 36–56; the sequence is GSFFERSISLVLLLWCFLFLV. The region spanning 158-318 is the SUN domain; that stretch reads NGSSQLVNNG…SVVEVFGIDA (161 aa). The tract at residues 345 to 367 is disordered; that stretch reads ADEKQDGEIKSNRTDQIGKETEA. Positions 454–499 form a coiled coil; that stretch reads MEKELRDLELWKTLVASRVESLARGNSALRLDVEKIVKEQANLESK. 2 consecutive transmembrane segments (helical) span residues 501–521 and 540–560; these read LGVL…LVST and PDSG…IHLL.

As to quaternary structure, forms homomers. Interacts with SUN3 and TIK.

It is found in the membrane. Encodes a member of the mid-SUN subfamily of SUN-domain proteins. It is involved in early seed development and nuclear morphology. [TAIR]. This is SUN domain-containing protein 5 from Arabidopsis thaliana (Mouse-ear cress).